The chain runs to 476 residues: Serine--tRNA ligase (476 aa).

279 to 281 (TAE) is an L-serine binding site. Residue 310 to 312 (RAE) coordinates ATP. E333 is an L-serine binding site. 400-403 (EISS) contributes to the ATP binding site. S435 is an L-serine binding site.

Belongs to the class-II aminoacyl-tRNA synthetase family. Type-1 seryl-tRNA synthetase subfamily. As to quaternary structure, homodimer. The tRNA molecule binds across the dimer.

The protein localises to the cytoplasm. It carries out the reaction tRNA(Ser) + L-serine + ATP = L-seryl-tRNA(Ser) + AMP + diphosphate + H(+). The enzyme catalyses tRNA(Sec) + L-serine + ATP = L-seryl-tRNA(Sec) + AMP + diphosphate + H(+). The protein operates within aminoacyl-tRNA biosynthesis; selenocysteinyl-tRNA(Sec) biosynthesis; L-seryl-tRNA(Sec) from L-serine and tRNA(Sec): step 1/1. In terms of biological role, catalyzes the attachment of serine to tRNA(Ser). Is also able to aminoacylate tRNA(Sec) with serine, to form the misacylated tRNA L-seryl-tRNA(Sec), which will be further converted into selenocysteinyl-tRNA(Sec). The polypeptide is Serine--tRNA ligase (Rhodopseudomonas palustris (strain BisA53)).